The following is a 903-amino-acid chain: Calcium-activated chloride channel regulator 1 (903 aa).

The signal sequence occupies residues 1-21 (MVPRLTVILFLTLHLLPGMKS). The interval 45 to 199 (DEKLIQNIKE…HITGTNVIVK (155 aa)) is metalloprotease domain. His-155 provides a ligand contact to Zn(2+). The active site involves Glu-156. Zn(2+) is bound by residues His-159 and Asp-166. The VWFA domain maps to 308–476 (VVCLVLDKSG…NGLTNAFSRI (169 aa)). Asn-360, Asn-372, Asn-504, and Asn-842 each carry an N-linked (GlcNAc...) asparagine glycan. Residues 883 to 903 (GTKISAINLAIFALAMILSIV) form a helical membrane-spanning segment.

Belongs to the CLCR family. Post-translationally, glycosylated. In terms of processing, the 125-kDa product is autoproteolytically processed by the metalloprotease domain and yields to two cell-surface-associated subunits, a 90-kDa protein and a group of 37- to 41-kDa proteins. The cleavage is necessary for calcium-activated chloride channel (CaCC) activation activity. As to expression, trachea.

It is found in the apical cell membrane. Its function is as follows. May be involved in mediating calcium-activated chloride conductance. May play critical roles in goblet cell metaplasia, mucus hypersecretion, cystic fibrosis and AHR. May be involved in the regulation of mucus production and/or secretion by goblet cells. Involved in the regulation of tissue inflammation in the innate immune response. May play a role as a tumor suppressor. Induces MUC5AC. The chain is Calcium-activated chloride channel regulator 1 from Bos taurus (Bovine).